The following is a 715-amino-acid chain: Arginine kinase (715 aa).

Approximate repeat units follow at residues 1–366 (MADP…IAKK) and 367–715 (RSVF…KSTK). One can recognise a Phosphagen kinase N-terminal 1 domain in the interval 11-95 (KSKNAFPDPL…FDAIIEDYHS (85 aa)). A substrate-binding site is contributed by 68-72 (GVGVY). Positions 123-362 (YIRSTRIRVA…KALMELEKEA (240 aa)) constitute a Phosphagen kinase C-terminal 1 domain. Residues 126-130 (STRIR) and histidine 189 each bind ATP. Substrate is bound at residue glutamate 229. Arginine 233 serves as a coordination point for ATP. Cysteine 275 provides a ligand contact to substrate. Residues 284 to 288 (RASVH) and 312 to 317 (RGIHGE) each bind ATP. Position 317 (glutamate 317) interacts with substrate. Positions 365–447 (KKRSVFPEVL…FDKIVEDYHS (83 aa)) constitute a Phosphagen kinase N-terminal 2 domain. A Phosphagen kinase C-terminal 2 domain is found at 475 to 714 (YIRSTRIRVA…KKLLEIEKST (240 aa)).

Belongs to the ATP:guanido phosphotransferase family. In terms of assembly, monomer.

It catalyses the reaction L-arginine + ATP = N(omega)-phospho-L-arginine + ADP + H(+). In Anthopleura japonica (Sea anemone), this protein is Arginine kinase.